The primary structure comprises 21 residues: KLSGCFGFKLDRIGTMSGLGC.

A disulfide bridge connects residues Cys-5 and Cys-21.

In terms of tissue distribution, expressed by the venom gland.

The protein resides in the secreted. Scorpion venom natriuretic peptide that increases the perfusion pressure, glomerular filtration rate and urinary flow in the isolated perfused rat kidney assay. Induces a decrease of the percentages of renal transport for sodium, potassium and chloride and an increase of the urinary cGMP concentration. Also down-regulates the mRNA expression of natriuretic peptide receptor 1 (NPR1) in the kidneys whereas it up-regulates those of NPR2, NPR3 and guanylyl cyclase C (GUCY2C) mRNAs. May exhibit hypotensive and vasodepressor activities. The protein is Natriuretic peptide TsNP of Tityus serrulatus (Brazilian scorpion).